A 261-amino-acid polypeptide reads, in one-letter code: Ribonuclease 3 (261 aa).

The RNase III domain occupies 20 to 144 (YFALYRMLGF…FIGAIYLDKG (125 aa)). Glutamate 62 is a binding site for Mg(2+). Aspartate 66 is a catalytic residue. The Mg(2+) site is built by asparagine 130 and glutamate 133. The active site involves glutamate 133. Residues 172 to 241 (NFKSKLFEWC…SQMTWRKIRT (70 aa)) enclose the DRBM domain.

The protein belongs to the ribonuclease III family. Homodimer. The cofactor is Mg(2+).

The protein localises to the cytoplasm. The catalysed reaction is Endonucleolytic cleavage to 5'-phosphomonoester.. Digests double-stranded RNA. Involved in the processing of primary rRNA transcript to yield the immediate precursors to the large and small rRNAs (23S and 16S). Processes some mRNAs, and tRNAs when they are encoded in the rRNA operon. Processes pre-crRNA and tracrRNA of type II CRISPR loci if present in the organism. In Azobacteroides pseudotrichonymphae genomovar. CFP2, this protein is Ribonuclease 3.